We begin with the raw amino-acid sequence, 353 residues long: UPF0283 membrane protein YcjF (353 aa).

A run of 3 helical transmembrane segments spans residues 70-90 (MVMGGLALFGASVVGQGVQWT), 100-120 (VALGGCAAGALIIGAGVGSVV), and 213-233 (ESTLMIAVSPLALVDMAFIAW).

Belongs to the UPF0283 family.

Its subcellular location is the cell inner membrane. The sequence is that of UPF0283 membrane protein YcjF from Escherichia fergusonii (strain ATCC 35469 / DSM 13698 / CCUG 18766 / IAM 14443 / JCM 21226 / LMG 7866 / NBRC 102419 / NCTC 12128 / CDC 0568-73).